Reading from the N-terminus, the 898-residue chain is Translation initiation factor IF-2 (898 aa).

Disordered stretches follow at residues 51–70 (RKSH…LKRK) and 114–303 (LAAE…KQHG). Basic and acidic residues-rich tracts occupy residues 114–171 (LAAE…EKSK) and 184–258 (PAKE…DDKG). The 170-residue stretch at 398–567 (HRAPVVTIMG…LLQSELLELQ (170 aa)) folds into the tr-type G domain. Residues 407 to 414 (GHVDHGKT) form a G1 region. Residue 407–414 (GHVDHGKT) participates in GTP binding. Positions 432-436 (GITQH) are G2. The interval 453–456 (DTPG) is G3. GTP-binding positions include 453–457 (DTPGH) and 507–510 (NKID). The tract at residues 507 to 510 (NKID) is G4. The interval 543–545 (SAH) is G5.

This sequence belongs to the TRAFAC class translation factor GTPase superfamily. Classic translation factor GTPase family. IF-2 subfamily.

Its subcellular location is the cytoplasm. Functionally, one of the essential components for the initiation of protein synthesis. Protects formylmethionyl-tRNA from spontaneous hydrolysis and promotes its binding to the 30S ribosomal subunits. Also involved in the hydrolysis of GTP during the formation of the 70S ribosomal complex. The polypeptide is Translation initiation factor IF-2 (Alcanivorax borkumensis (strain ATCC 700651 / DSM 11573 / NCIMB 13689 / SK2)).